Reading from the N-terminus, the 202-residue chain is Protein DEHYDRATION-INDUCED 19 homolog 5 (202 aa).

Residues 88–97 (SHLLKRRKPS) are compositionally biased toward basic residues. The disordered stretch occupies residues 88-120 (SHLLKRRKPSRPSSSWPTPSNNSDPYFEGPPQY). Low complexity predominate over residues 98–112 (RPSSSWPTPSNNSDP).

Belongs to the Di19 family.

The protein is Protein DEHYDRATION-INDUCED 19 homolog 5 (DI19-5) of Oryza sativa subsp. japonica (Rice).